The primary structure comprises 327 residues: tRNA uridine(34) hydroxylase (327 aa).

The Rhodanese domain maps to 130–224 (LDEDTVVLDT…YGKDPEVQGE (95 aa)). Residue C184 is the Cysteine persulfide intermediate of the active site.

The protein belongs to the TrhO family.

It carries out the reaction uridine(34) in tRNA + AH2 + O2 = 5-hydroxyuridine(34) in tRNA + A + H2O. Catalyzes oxygen-dependent 5-hydroxyuridine (ho5U) modification at position 34 in tRNAs. The polypeptide is tRNA uridine(34) hydroxylase (Streptococcus thermophilus (strain ATCC BAA-491 / LMD-9)).